Reading from the N-terminus, the 131-residue chain is Ribosome-binding factor A (131 aa).

It belongs to the RbfA family. As to quaternary structure, monomer. Binds 30S ribosomal subunits, but not 50S ribosomal subunits or 70S ribosomes.

The protein resides in the cytoplasm. Functionally, one of several proteins that assist in the late maturation steps of the functional core of the 30S ribosomal subunit. Associates with free 30S ribosomal subunits (but not with 30S subunits that are part of 70S ribosomes or polysomes). Required for efficient processing of 16S rRNA. May interact with the 5'-terminal helix region of 16S rRNA. In Ruegeria sp. (strain TM1040) (Silicibacter sp.), this protein is Ribosome-binding factor A.